Consider the following 393-residue polypeptide: Chalcone synthase 1 (393 aa).

Cys166 is an active-site residue.

This sequence belongs to the thiolase-like superfamily. Chalcone/stilbene synthases family.

It carries out the reaction (E)-4-coumaroyl-CoA + 3 malonyl-CoA + 3 H(+) = 2',4,4',6'-tetrahydroxychalcone + 3 CO2 + 4 CoA. It functions in the pathway secondary metabolite biosynthesis; flavonoid biosynthesis. In terms of biological role, the primary product of this enzyme is 4,2',4',6'-tetrahydroxychalcone (also termed naringenin-chalcone or chalcone) which can under specific conditions spontaneously isomerize into naringenin. In Ruta graveolens (Common rue), this protein is Chalcone synthase 1 (CHS1).